The sequence spans 291 residues: Ribose-phosphate pyrophosphokinase (291 aa).

ATP-binding positions include Asp34 to Glu36 and Arg92 to Gln93. The Mg(2+) site is built by His125 and Asp165. Lys188 is a catalytic residue. Arg190 and Asp214 together coordinate D-ribose 5-phosphate.

The protein belongs to the ribose-phosphate pyrophosphokinase family. Class III (archaeal) subfamily. The cofactor is Mg(2+).

Its subcellular location is the cytoplasm. The enzyme catalyses D-ribose 5-phosphate + ATP = 5-phospho-alpha-D-ribose 1-diphosphate + AMP + H(+). It participates in metabolic intermediate biosynthesis; 5-phospho-alpha-D-ribose 1-diphosphate biosynthesis; 5-phospho-alpha-D-ribose 1-diphosphate from D-ribose 5-phosphate (route I): step 1/1. Functionally, involved in the biosynthesis of the central metabolite phospho-alpha-D-ribosyl-1-pyrophosphate (PRPP) via the transfer of pyrophosphoryl group from ATP to 1-hydroxyl of ribose-5-phosphate (Rib-5-P). The chain is Ribose-phosphate pyrophosphokinase from Methanopyrus kandleri (strain AV19 / DSM 6324 / JCM 9639 / NBRC 100938).